Reading from the N-terminus, the 368-residue chain is Histidinol-phosphate aminotransferase (368 aa).

Residue K224 is modified to N6-(pyridoxal phosphate)lysine.

The protein belongs to the class-II pyridoxal-phosphate-dependent aminotransferase family. Histidinol-phosphate aminotransferase subfamily. As to quaternary structure, homodimer. It depends on pyridoxal 5'-phosphate as a cofactor.

The catalysed reaction is L-histidinol phosphate + 2-oxoglutarate = 3-(imidazol-4-yl)-2-oxopropyl phosphate + L-glutamate. It participates in amino-acid biosynthesis; L-histidine biosynthesis; L-histidine from 5-phospho-alpha-D-ribose 1-diphosphate: step 7/9. The chain is Histidinol-phosphate aminotransferase from Agrobacterium fabrum (strain C58 / ATCC 33970) (Agrobacterium tumefaciens (strain C58)).